Reading from the N-terminus, the 189-residue chain is Auxin-responsive protein IAA3 (189 aa).

The EAR-like (transcriptional repression) signature appears at 12–16; it reads LRLGL. Positions 42-65 are disordered; the sequence is TDTEKEIESSSRKTETSPPRKAQI. Positions 43 to 56 are enriched in basic and acidic residues; that stretch reads DTEKEIESSSRKTE. In terms of domain architecture, PB1 spans 92-179; the sequence is GIYVKVSMDG…TCKRLRIMKG (88 aa).

The protein belongs to the Aux/IAA family. In terms of assembly, homodimers and heterodimers. Interacts with TPL. Interacts with TIR1, the F-box component of the Skp1-Cdc53/cullin-F-box (SCFTIR1) E3 ubiquitin ligase complex. Phosphorylated by phytochrome A in vitro. In terms of tissue distribution, highly expressed in stems and flowers. Expressed in hypocotyls, cotyledons and leaves, but barely detected in roots. Expressed in root tips. In the root meristem, specifically detected at the vascular tissue transition zone.

It localises to the nucleus. In terms of biological role, aux/IAA proteins are short-lived transcriptional factors that function as repressors of early auxin response genes at low auxin concentrations. Repression is thought to result from the interaction with auxin response factors (ARFs), proteins that bind to the auxin-responsive promoter element (AuxRE). Plays a central role in auxin regulation of root growth, in gravitropism, and in lateral root formation. Regulated by an auxin-induced protein turnover. Formation of heterodimers with ARF proteins may alter their ability to modulate early auxin response genes expression. When activated by cytokinin, restricts the expression of the PIN genes to the vascular transition zone. Induction of SHY2 in the vascular transition zone restricts BRX expression to down-regulate PIN3 and thus limit meristem growth, but proper SHY2 expression requires BRX. Involved in meristem growth and in determining its size. May participate in strigolactone signaling to regulate meristem size and lateral root formation. This Arabidopsis thaliana (Mouse-ear cress) protein is Auxin-responsive protein IAA3 (IAA3).